The sequence spans 612 residues: Glucoamylase (612 aa).

Positions Met1 to Ala19 are cleaved as a signal peptide. A propeptide spanning residues Val20–Arg25 is cleaved from the precursor. Asn39 is a glycosylation site (N-linked (GlcNAc...) asparagine). Trp146 lines the substrate pocket. Asp202 functions as the Proton acceptor in the catalytic mechanism. The Proton donor role is filled by Glu205. Cystine bridges form between Cys236–Cys239, Cys248–Cys475, and Cys288–Cys296. A CBM20 domain is found at Cys506 to Arg612.

This sequence belongs to the glycosyl hydrolase 15 family.

It catalyses the reaction Hydrolysis of terminal (1-&gt;4)-linked alpha-D-glucose residues successively from non-reducing ends of the chains with release of beta-D-glucose.. In Aspergillus oryzae (strain ATCC 42149 / RIB 40) (Yellow koji mold), this protein is Glucoamylase (glaA).